The chain runs to 108 residues: Heme oxygenase (staphylobilin-producing) 2 (108 aa).

In terms of domain architecture, ABM spans phenylalanine 2–leucine 93. Asparagine 6 lines the Fe cation pocket. Residues arginine 21–isoleucine 28 and histidine 76 each bind heme.

The protein belongs to the antibiotic biosynthesis monooxygenase family. Heme-degrading monooxygenase IsdG subfamily. As to quaternary structure, homodimer.

It localises to the cytoplasm. It carries out the reaction heme b + 5 AH2 + 4 O2 + 2 H(+) = delta-staphylobilin + Fe(2+) + formaldehyde + 5 A + 4 H2O. The enzyme catalyses heme b + 5 AH2 + 4 O2 + 2 H(+) = beta-staphylobilin + Fe(2+) + formaldehyde + 5 A + 4 H2O. Its function is as follows. Allows bacterial pathogens to use the host heme as an iron source. Catalyzes the oxidative degradation of the heme macrocyclic porphyrin ring to the oxo-bilirubin chromophore staphylobilin (a mixture of the linear tetrapyrroles 5-oxo-delta-bilirubin and 15-oxo-beta-bilirubin) in the presence of a suitable electron donor such as ascorbate or NADPH--cytochrome P450 reductase, with subsequent release of free iron. The sequence is that of Heme oxygenase (staphylobilin-producing) 2 (isdI) from Staphylococcus aureus (strain MRSA252).